The following is a 1039-amino-acid chain: Pleckstrin homology domain-containing family G member 5 (1039 aa).

2 disordered regions span residues 58–105 (NVST…RRHT) and 185–277 (PGDE…SSES). Basic and acidic residues-rich tracts occupy residues 185 to 199 (PGDE…KDSK) and 217 to 228 (ERVDPQSRRESS). A compositionally biased stretch (low complexity) spans 259 to 277 (SSCSLPVGSSVGSSGSSES). Residues 372 to 564 (HQQEAVWELL…ERFIHHVNTC (193 aa)) form the DH domain. Positions 620-720 (QLLLEGSLRM…WVDTLYNAQN (101 aa)) constitute a PH domain. 2 disordered regions span residues 739 to 785 (QHLQ…ASDG) and 800 to 836 (TLSS…LLPL). Acidic residues predominate over residues 744–757 (LEEEEDEQEEEGEE). Polar residues-rich tracts occupy residues 758–776 (SGTS…SNSL) and 811–831 (FSSQ…TPTS). Position 760 is a phosphothreonine (Thr760). Ser765 carries the phosphoserine modification. The residue at position 876 (Thr876) is a Phosphothreonine. Residues Ser878, Ser903, and Ser908 each carry the phosphoserine modification. A disordered region spans residues 967-989 (PLSESENRPSHKAGGPADSARRK).

Interacts with GIPC1/synectin and RHOA. In terms of tissue distribution, selectively expressed in cortical and hippocampal neurons with prominent expression in the cell bodies and dendrites. Weakly expressed in rat fad pad ECs (RFPECs).

The protein resides in the cytoplasm. It localises to the perinuclear region. The protein localises to the cell membrane. Its subcellular location is the cell junction. It is found in the cell projection. The protein resides in the lamellipodium. Functions as a guanine exchange factor (GEF) for RAB26 and thus regulates autophagy of synaptic vesicles in axon terminal of motoneurons. Involved in the control of neuronal cell differentiation. Plays a role in angiogenesis through regulation of endothelial cells chemotaxis. Also affects the migration, adhesion, and matrix/bone degradation in macrophages and osteoclasts. The polypeptide is Pleckstrin homology domain-containing family G member 5 (Plekhg5) (Rattus norvegicus (Rat)).